The chain runs to 241 residues: Small ribosomal subunit protein uS2 (241 aa).

The protein belongs to the universal ribosomal protein uS2 family.

This Klebsiella pneumoniae subsp. pneumoniae (strain ATCC 700721 / MGH 78578) protein is Small ribosomal subunit protein uS2.